The chain runs to 301 residues: Ribosomal protein L11 methyltransferase (301 aa).

S-adenosyl-L-methionine contacts are provided by Thr146, Gly167, Asp189, and Asn234.

The protein belongs to the methyltransferase superfamily. PrmA family.

It localises to the cytoplasm. It catalyses the reaction L-lysyl-[protein] + 3 S-adenosyl-L-methionine = N(6),N(6),N(6)-trimethyl-L-lysyl-[protein] + 3 S-adenosyl-L-homocysteine + 3 H(+). Its function is as follows. Methylates ribosomal protein L11. This Acinetobacter baumannii (strain SDF) protein is Ribosomal protein L11 methyltransferase.